The chain runs to 92 residues: Large ribosomal subunit protein bL31 (92 aa).

It belongs to the bacterial ribosomal protein bL31 family. Type A subfamily. In terms of assembly, part of the 50S ribosomal subunit.

Binds the 23S rRNA. The chain is Large ribosomal subunit protein bL31 from Mesoplasma florum (strain ATCC 33453 / NBRC 100688 / NCTC 11704 / L1) (Acholeplasma florum).